A 762-amino-acid chain; its full sequence is 1-phosphatidylinositol 4,5-bisphosphate phosphodiesterase delta-4 (762 aa).

The region spanning 16-124 is the PH domain; sequence LLMQEGMPMR…WMRGLQLLVD (109 aa). Positions 26 to 53 are substrate binding; sequence KVRSKSWKKLRYFRLQNDGMTVWHARQA. EF-hand domains are found at residues 134 to 169, 170 to 205, and 206 to 237; these read RLDQ…MNVE, MDQE…LTKR, and AEVQ…EQKE. Ca(2+) contacts are provided by Asp-147, Asn-149, Asp-151, Lys-153, Glu-158, Asp-183, Ser-185, Ser-187, Thr-189, and Glu-194. Residues 213-243 carry the GBA motif; it reads ESFSADGQKLTLLEFLDFLQEEQKERDCTSE. Positions 290-435 constitute a PI-PLC X-box domain; that stretch reads QDMTQPLNHY…LRRKILVKGK (146 aa). His-305 is a catalytic residue. Ca(2+) is bound by residues Asn-306, Glu-335, and Asp-337. Residue His-350 is part of the active site. Ca(2+) is bound at residue Glu-384. Substrate is bound by residues Lys-433 and Lys-435. The span at 443-471 shows a compositional bias: acidic residues; that stretch reads LEYEEEEAEPELEESELALESQFETEPEP. The segment at 443 to 483 is disordered; that stretch reads LEYEEEEAEPELEESELALESQFETEPEPQEQNLQNKDKKK. Residue Ser-457 is modified to Phosphoserine. In terms of domain architecture, PI-PLC Y-box spans 493-609; that stretch reads LSSLVIYLKS…GYVLKPDFLR (117 aa). Residues Ser-522 and Arg-549 each contribute to the substrate site. The C2 domain occupies 609-736; sequence RDIQSSFHPE…QGYRHIHLLS (128 aa). Ca(2+)-binding residues include Ile-650, Asp-652, Asn-676, Asp-705, Tyr-706, and Asp-707. Residues 731 to 734 carry the PDZ-binding motif; it reads HIHL.

Interacts with GRIP1. In terms of assembly, interacts (via GBA motif) with guanine nucleotide-binding protein G(i) alpha subunit GNAI3 (inactive GDP-bound form); high-affinity interaction. As to quaternary structure, interacts (via GBA motif) with guanine nucleotide-binding protein G(i) alpha subunit GNAI3 (inactive GDP-bound form); low-affinity interaction. Requires Ca(2+) as cofactor. Highly expressed in skeletal muscle and kidney tissues, and at moderate level in intestinal tissue. Expressed in corneal epithelial cells.

Its subcellular location is the membrane. It is found in the nucleus. The protein resides in the cytoplasm. It localises to the endoplasmic reticulum. It carries out the reaction a 1,2-diacyl-sn-glycero-3-phospho-(1D-myo-inositol-4,5-bisphosphate) + H2O = 1D-myo-inositol 1,4,5-trisphosphate + a 1,2-diacyl-sn-glycerol + H(+). The enzyme catalyses a 1,2-diacyl-sn-glycero-3-phospho-(1D-myo-inositol) + H2O = 1D-myo-inositol 1-phosphate + a 1,2-diacyl-sn-glycerol + H(+). Functionally, hydrolyzes the phosphatidylinositol 4,5-bisphosphate (PIP2) to generate 2 second messenger molecules diacylglycerol (DAG) and inositol 1,4,5-trisphosphate (IP3). DAG mediates the activation of protein kinase C (PKC), while IP3 releases Ca(2+) from intracellular stores. Required for acrosome reaction in sperm during fertilization, probably by acting as an important enzyme for intracellular Ca(2+) mobilization in the zona pellucida-induced acrosome reaction. May play a role in cell growth. Modulates the liver regeneration in cooperation with nuclear PKC. Overexpression up-regulates the Erk signaling pathway and proliferation. In terms of biological role, acts as a non-receptor guanine nucleotide exchange factor which binds to and activates guanine nucleotide-binding protein (G-protein) alpha subunit GNAI3. In Homo sapiens (Human), this protein is 1-phosphatidylinositol 4,5-bisphosphate phosphodiesterase delta-4.